We begin with the raw amino-acid sequence, 2242 residues long: Multifunctional protein CAD (2242 aa).

The interval 1–365 (MATLFLDDGS…CARDVKLGVN (365 aa)) is GATase (Glutamine amidotransferase). L-glutamine is bound by residues serine 44, glycine 222, and glycine 224. Residues 177–363 (KIMAVDCGMK…LECARDVKLG (187 aa)) enclose the Glutamine amidotransferase type-1 domain. The active-site Nucleophile; for GATase activity is cysteine 252. The L-glutamine site is built by leucine 253, glutamine 256, asparagine 294, glycine 296, and phenylalanine 297. Residues histidine 336 and glutamate 338 each act as for GATase activity in the active site. A linker region spans residues 366 to 397 (LDKTVKGRVISHYSFKNGTENSKTPPGRIQPH). The tract at residues 398 to 937 (KVLILGSGGL…GEGHDLDFTK (540 aa)) is CPSase A. The CPSase (Carbamoyl-phosphate synthase) stretch occupies residues 398–1462 (KVLILGSGGL…TPPVKTHIDS (1065 aa)). Residues arginine 518, arginine 558, glycine 564, glycine 565, lysine 595, glutamate 602, glycine 628, isoleucine 629, histidine 630, glutamine 671, and glutamate 685 each contribute to the ATP site. 2 ATP-grasp domains span residues 522 to 714 (VEKM…KLAL) and 1057 to 1248 (SRML…KVIM). Mg(2+)-binding residues include glutamine 671, glutamate 685, and asparagine 687. Positions 671, 685, and 687 each coordinate Mn(2+). The CPSase B stretch occupies residues 938-1462 (PHVMVIGSGV…TPPVKTHIDS (525 aa)). Arginine 1093, lysine 1132, isoleucine 1134, glutamate 1139, glycine 1164, valine 1165, histidine 1166, serine 1167, glutamine 1207, and glutamate 1219 together coordinate ATP. Residues glutamine 1207, glutamate 1219, and asparagine 1221 each contribute to the Mg(2+) site. Positions 1207, 1219, and 1221 each coordinate Mn(2+). The region spanning 1313–1469 (FKIPKKNILL…IDSMSSHKLI (157 aa)) is the MGS-like domain. The segment at 1463–1796 (MSSHKLIRLP…KGRVRRVVLR (334 aa)) is DHOase (dihydroorotase). Positions 1478 and 1480 each coordinate Zn(2+). Residues arginine 1482 and asparagine 1512 each coordinate (S)-dihydroorotate. Positions 1563, 1597, 1620, 1621, and 1644 each coordinate Zn(2+). Lysine 1563 is modified (N6-carboxylysine). Arginine 1668 lines the (S)-dihydroorotate pocket. Position 1693 (aspartate 1693) interacts with Zn(2+). Aspartate 1693 (for DHOase activity) is an active-site residue. (S)-dihydroorotate-binding residues include histidine 1697 and proline 1709. The linker stretch occupies residues 1797 to 1934 (GEVAYIDGQV…QAVPHPYSLL (138 aa)). Residues 1829-1862 (PTTVKTPEHSKPTQTETVRTRTASPRRLASSGPA) are disordered. Residues 1840–1851 (PTQTETVRTRTA) show a composition bias toward polar residues. The ATCase (Aspartate transcarbamylase) stretch occupies residues 1935–2242 (LHPFVGQHIL…ALLATVLGKF (308 aa)). The carbamoyl phosphate site is built by arginine 1992 and threonine 1993. Lysine 2020 is a binding site for L-aspartate. 3 residues coordinate carbamoyl phosphate: arginine 2041, histidine 2069, and glutamine 2072. Residues arginine 2102 and arginine 2163 each coordinate L-aspartate. Carbamoyl phosphate is bound by residues leucine 2202 and proline 2203.

The protein in the N-terminal section; belongs to the CarA family. In the 2nd section; belongs to the CarB family. This sequence in the 3rd section; belongs to the metallo-dependent hydrolases superfamily. DHOase family. CAD subfamily. It in the C-terminal section; belongs to the aspartate/ornithine carbamoyltransferase superfamily. ATCase family. As to quaternary structure, homohexamer. Requires Mg(2+) as cofactor. The cofactor is Mn(2+). It depends on Zn(2+) as a cofactor. As to expression, present in the testis but not in the liver.

It localises to the cytoplasm. The protein resides in the nucleus. It catalyses the reaction hydrogencarbonate + L-glutamine + 2 ATP + H2O = carbamoyl phosphate + L-glutamate + 2 ADP + phosphate + 2 H(+). The catalysed reaction is L-glutamine + H2O = L-glutamate + NH4(+). The enzyme catalyses hydrogencarbonate + NH4(+) + 2 ATP = carbamoyl phosphate + 2 ADP + phosphate + 2 H(+). It carries out the reaction carbamoyl phosphate + L-aspartate = N-carbamoyl-L-aspartate + phosphate + H(+). It catalyses the reaction (S)-dihydroorotate + H2O = N-carbamoyl-L-aspartate + H(+). It functions in the pathway pyrimidine metabolism; UMP biosynthesis via de novo pathway; (S)-dihydroorotate from bicarbonate: step 1/3. It participates in pyrimidine metabolism; UMP biosynthesis via de novo pathway; (S)-dihydroorotate from bicarbonate: step 2/3. The protein operates within pyrimidine metabolism; UMP biosynthesis via de novo pathway; (S)-dihydroorotate from bicarbonate: step 3/3. Allosterically regulated and controlled by phosphorylation. 5-phosphoribose 1-diphosphate is an activator while UMP is an inhibitor of the CPSase reaction. In terms of biological role, multifunctional protein that encodes the first 3 enzymatic activities of the de novo pyrimidine pathway: carbamoylphosphate synthetase (CPSase; EC 6.3.5.5), aspartate transcarbamylase (ATCase; EC 2.1.3.2) and dihydroorotase (DHOase; EC 3.5.2.3). The CPSase-function is accomplished in 2 steps, by a glutamine-dependent amidotransferase activity (GATase) that binds and cleaves glutamine to produce ammonia, followed by an ammonium-dependent carbamoyl phosphate synthetase, which reacts with the ammonia, hydrogencarbonate and ATP to form carbamoyl phosphate. The endogenously produced carbamoyl phosphate is sequestered and channeled to the ATCase active site. ATCase then catalyzes the formation of carbamoyl-L-aspartate from L-aspartate and carbamoyl phosphate. In the last step, DHOase catalyzes the cyclization of carbamoyl aspartate to dihydroorotate. In Squalus acanthias (Spiny dogfish), this protein is Multifunctional protein CAD (CAD).